A 308-amino-acid polypeptide reads, in one-letter code: Probable pyridoxal 5'-phosphate synthase subunit pdx-1 (308 aa).

Aspartate 30 contributes to the D-ribose 5-phosphate binding site. Lysine 87 serves as the catalytic Schiff-base intermediate with D-ribose 5-phosphate. A D-ribose 5-phosphate-binding site is contributed by glycine 159. Arginine 171 contributes to the D-glyceraldehyde 3-phosphate binding site. D-ribose 5-phosphate contacts are provided by residues glycine 224 and 245 to 246 (GS).

The protein belongs to the PdxS/SNZ family.

The enzyme catalyses aldehydo-D-ribose 5-phosphate + D-glyceraldehyde 3-phosphate + L-glutamine = pyridoxal 5'-phosphate + L-glutamate + phosphate + 3 H2O + H(+). It functions in the pathway cofactor biosynthesis; pyridoxal 5'-phosphate biosynthesis. Functionally, catalyzes the formation of pyridoxal 5'-phosphate from ribose 5-phosphate (RBP), glyceraldehyde 3-phosphate (G3P) and ammonia. The ammonia is provided by pdx-2. Can also use ribulose 5-phosphate and dihydroxyacetone phosphate as substrates, resulting from enzyme-catalyzed isomerization of RBP and G3P, respectively. Also plays an indirect role in resistance to singlet oxygen-generating photosensitizers. The chain is Probable pyridoxal 5'-phosphate synthase subunit pdx-1 (pdx-1) from Neurospora crassa (strain ATCC 24698 / 74-OR23-1A / CBS 708.71 / DSM 1257 / FGSC 987).